The following is a 250-amino-acid chain: 2,3-bisphosphoglycerate-dependent phosphoglycerate mutase (250 aa).

Substrate-binding positions include 8 to 15, 21 to 22, R60, 87 to 90, K98, 114 to 115, and 183 to 184; these read RHGQSAWN, TG, ERHY, RR, and GN. The Tele-phosphohistidine intermediate role is filled by H9. The active-site Proton donor/acceptor is the E87.

The protein belongs to the phosphoglycerate mutase family. BPG-dependent PGAM subfamily. As to quaternary structure, homodimer.

The enzyme catalyses (2R)-2-phosphoglycerate = (2R)-3-phosphoglycerate. The protein operates within carbohydrate degradation; glycolysis; pyruvate from D-glyceraldehyde 3-phosphate: step 3/5. Its function is as follows. Catalyzes the interconversion of 2-phosphoglycerate and 3-phosphoglycerate. In Nitratidesulfovibrio vulgaris (strain DP4) (Desulfovibrio vulgaris), this protein is 2,3-bisphosphoglycerate-dependent phosphoglycerate mutase.